The following is a 525-amino-acid chain: Lysine--tRNA ligase (525 aa).

The short motif at 40–48 (ASGIPHMGS) is the 'HIGH' region element. Positions 295 to 299 (KISKS) match the 'KMSKS' region motif. Residue lysine 298 participates in ATP binding.

The protein belongs to the class-I aminoacyl-tRNA synthetase family.

The protein localises to the cytoplasm. It carries out the reaction tRNA(Lys) + L-lysine + ATP = L-lysyl-tRNA(Lys) + AMP + diphosphate. The polypeptide is Lysine--tRNA ligase (lysS) (Cenarchaeum symbiosum (strain A)).